Consider the following 503-residue polypeptide: 3-octaprenyl-4-hydroxybenzoate carboxy-lyase (503 aa).

Residue N176 participates in Mn(2+) binding. Prenylated FMN-binding positions include 179 to 181 (IYR), 193 to 195 (RWL), and 198 to 199 (RG). E242 lines the Mn(2+) pocket. The active-site Proton donor is the D303.

The protein belongs to the UbiD family. As to quaternary structure, homohexamer. The cofactor is prenylated FMN. It depends on Mn(2+) as a cofactor.

Its subcellular location is the cell membrane. It catalyses the reaction a 4-hydroxy-3-(all-trans-polyprenyl)benzoate + H(+) = a 2-(all-trans-polyprenyl)phenol + CO2. The protein operates within cofactor biosynthesis; ubiquinone biosynthesis. Functionally, catalyzes the decarboxylation of 3-octaprenyl-4-hydroxy benzoate to 2-octaprenylphenol, an intermediate step in ubiquinone biosynthesis. This Ralstonia pickettii (strain 12J) protein is 3-octaprenyl-4-hydroxybenzoate carboxy-lyase.